A 332-amino-acid chain; its full sequence is DNA-directed RNA polymerase subunit alpha (332 aa).

The tract at residues 1-230 (MKKITTSAYM…KQMSIFNNVL (230 aa)) is alpha N-terminal domain (alpha-NTD). Residues 246–332 (EHSKLLESVE…LRKKISELKS (87 aa)) form an alpha C-terminal domain (alpha-CTD) region.

Belongs to the RNA polymerase alpha chain family. Homodimer. The RNAP catalytic core consists of 2 alpha, 1 beta, 1 beta' and 1 omega subunit. When a sigma factor is associated with the core the holoenzyme is formed, which can initiate transcription.

It carries out the reaction RNA(n) + a ribonucleoside 5'-triphosphate = RNA(n+1) + diphosphate. Functionally, DNA-dependent RNA polymerase catalyzes the transcription of DNA into RNA using the four ribonucleoside triphosphates as substrates. This chain is DNA-directed RNA polymerase subunit alpha, found in Campylobacter fetus subsp. fetus (strain 82-40).